The primary structure comprises 122 residues: UPF0102 protein NGR_c36770 (122 aa).

The protein belongs to the UPF0102 family.

In Sinorhizobium fredii (strain NBRC 101917 / NGR234), this protein is UPF0102 protein NGR_c36770.